We begin with the raw amino-acid sequence, 274 residues long: Undecaprenyl-diphosphatase (274 aa).

The next 6 membrane-spanning stretches (helical) occupy residues 44-64 (AKVF…LVYW), 85-105 (LNVV…GKMI), 109-129 (LFIP…ILWA), 185-205 (ATDF…AYSL), 214-234 (VADI…AWLC), and 247-267 (FIPF…TAWT).

The protein belongs to the UppP family.

It is found in the cell inner membrane. The enzyme catalyses di-trans,octa-cis-undecaprenyl diphosphate + H2O = di-trans,octa-cis-undecaprenyl phosphate + phosphate + H(+). Functionally, catalyzes the dephosphorylation of undecaprenyl diphosphate (UPP). Confers resistance to bacitracin. The sequence is that of Undecaprenyl-diphosphatase from Variovorax paradoxus (strain S110).